A 354-amino-acid chain; its full sequence is Glyceraldehyde-3-phosphate dehydrogenase (354 aa).

Residues 11–12 (TI) and Gly108 each bind NAD(+). 137-139 (SCN) contributes to the D-glyceraldehyde 3-phosphate binding site. The Nucleophile role is filled by Cys138. Position 166 (Arg166) interacts with NAD(+). 192–193 (HG) serves as a coordination point for D-glyceraldehyde 3-phosphate. Gln299 contacts NAD(+).

This sequence belongs to the glyceraldehyde-3-phosphate dehydrogenase family. Homotetramer.

Its subcellular location is the cytoplasm. It catalyses the reaction D-glyceraldehyde 3-phosphate + phosphate + NADP(+) = (2R)-3-phospho-glyceroyl phosphate + NADPH + H(+). The catalysed reaction is D-glyceraldehyde 3-phosphate + phosphate + NAD(+) = (2R)-3-phospho-glyceroyl phosphate + NADH + H(+). The protein operates within carbohydrate degradation; glycolysis; pyruvate from D-glyceraldehyde 3-phosphate: step 1/5. The chain is Glyceraldehyde-3-phosphate dehydrogenase from Haloarcula marismortui (strain ATCC 43049 / DSM 3752 / JCM 8966 / VKM B-1809) (Halobacterium marismortui).